Consider the following 608-residue polypeptide: Alpha-glycerophosphate oxidase (608 aa).

21–49 provides a ligand contact to FAD; the sequence is DLLIIGGGITGAGVALQAAASGLETGLIE. Positions 393 to 418 are disordered; the sequence is SAVSKLESSTSEKHLDPSAVSRGSSL.

It belongs to the FAD-dependent glycerol-3-phosphate dehydrogenase family. FAD is required as a cofactor.

It is found in the cell membrane. The catalysed reaction is sn-glycerol 3-phosphate + O2 = dihydroxyacetone phosphate + H2O2. The protein operates within membrane lipid metabolism; glycerophospholipid metabolism. In Streptococcus pneumoniae serotype 4 (strain ATCC BAA-334 / TIGR4), this protein is Alpha-glycerophosphate oxidase (glpO).